A 297-amino-acid chain; its full sequence is Bifunctional protein FolD 1 (297 aa).

NADP(+) contacts are provided by residues 164–166 (GRS), Ser193, and Ile234.

It belongs to the tetrahydrofolate dehydrogenase/cyclohydrolase family. As to quaternary structure, homodimer.

It catalyses the reaction (6R)-5,10-methylene-5,6,7,8-tetrahydrofolate + NADP(+) = (6R)-5,10-methenyltetrahydrofolate + NADPH. The catalysed reaction is (6R)-5,10-methenyltetrahydrofolate + H2O = (6R)-10-formyltetrahydrofolate + H(+). Its pathway is one-carbon metabolism; tetrahydrofolate interconversion. In terms of biological role, catalyzes the oxidation of 5,10-methylenetetrahydrofolate to 5,10-methenyltetrahydrofolate and then the hydrolysis of 5,10-methenyltetrahydrofolate to 10-formyltetrahydrofolate. The sequence is that of Bifunctional protein FolD 1 from Haloarcula marismortui (strain ATCC 43049 / DSM 3752 / JCM 8966 / VKM B-1809) (Halobacterium marismortui).